The following is an 85-amino-acid chain: MQNQKHSHILTAITIVLLFAMAAKINAIDVHDAMCYRSECTSVCDQICLSHGYTNGWYCGTFRLHTGCCCLKKKELNQIISPSKN.

The N-terminal stretch at 1–27 is a signal peptide; it reads MQNQKHSHILTAITIVLLFAMAAKINA. 4 disulfide bridges follow: cysteine 35–cysteine 70, cysteine 40–cysteine 59, cysteine 44–cysteine 68, and cysteine 48–cysteine 69.

It belongs to the DEFL family.

It is found in the secreted. The chain is Defensin-like protein 76 (LCR86) from Arabidopsis thaliana (Mouse-ear cress).